The sequence spans 318 residues: Glutathione synthetase (318 aa).

The ATP-grasp domain occupies Lys-128–Ala-313. Leu-154–Gly-210 lines the ATP pocket. Mg(2+)-binding residues include Glu-284 and Asn-286.

It belongs to the prokaryotic GSH synthase family. The cofactor is Mg(2+). It depends on Mn(2+) as a cofactor.

It catalyses the reaction gamma-L-glutamyl-L-cysteine + glycine + ATP = glutathione + ADP + phosphate + H(+). Its pathway is sulfur metabolism; glutathione biosynthesis; glutathione from L-cysteine and L-glutamate: step 2/2. The polypeptide is Glutathione synthetase (Neisseria meningitidis serogroup A / serotype 4A (strain DSM 15465 / Z2491)).